The sequence spans 358 residues: Molybdenum import ATP-binding protein ModC (358 aa).

The ABC transporter domain maps to 3–228 (INVKQKLGDL…LEMRPWLPAK (226 aa)). Residue 30–37 (GRSGAGKT) coordinates ATP. Residues 289-356 (QTSIRNVLLA…IKGVSVTKDD (68 aa)) enclose the Mop domain.

This sequence belongs to the ABC transporter superfamily. Molybdate importer (TC 3.A.1.8) family. As to quaternary structure, the complex is composed of two ATP-binding proteins (ModC), two transmembrane proteins (ModB) and a solute-binding protein (ModA).

Its subcellular location is the cell inner membrane. The catalysed reaction is molybdate(out) + ATP + H2O = molybdate(in) + ADP + phosphate + H(+). Part of the ABC transporter complex ModABC involved in molybdenum import. Responsible for energy coupling to the transport system. This Photobacterium profundum (strain SS9) protein is Molybdenum import ATP-binding protein ModC.